Here is a 362-residue protein sequence, read N- to C-terminus: Chorismate synthase (362 aa).

Arg-46 serves as a coordination point for NADP(+). Residues 122–124 (RSS), 238–239 (NA), Gly-278, 293–297 (KPTPS), and Arg-319 each bind FMN.

Belongs to the chorismate synthase family. Homotetramer. The cofactor is FMNH2.

The enzyme catalyses 5-O-(1-carboxyvinyl)-3-phosphoshikimate = chorismate + phosphate. Its pathway is metabolic intermediate biosynthesis; chorismate biosynthesis; chorismate from D-erythrose 4-phosphate and phosphoenolpyruvate: step 7/7. Its function is as follows. Catalyzes the anti-1,4-elimination of the C-3 phosphate and the C-6 proR hydrogen from 5-enolpyruvylshikimate-3-phosphate (EPSP) to yield chorismate, which is the branch point compound that serves as the starting substrate for the three terminal pathways of aromatic amino acid biosynthesis. This reaction introduces a second double bond into the aromatic ring system. The protein is Chorismate synthase of Campylobacter jejuni subsp. jejuni serotype O:23/36 (strain 81-176).